A 369-amino-acid chain; its full sequence is Serine/threonine-protein acetyltransferase HopZ1a (369 aa).

The disordered stretch occupies residues 1–46 (MGNVCVGGSRMSHQVYSPDRADTPPRSERNTPDRRQRAAGDAERTQ). Over residues 19–46 (DRADTPPRSERNTPDRRQRAAGDAERTQ) the composition is skewed to basic and acidic residues. 3 residues coordinate 1D-myo-inositol hexakisphosphate: Arg49, Lys53, and Arg106. Residues His150 and Glu170 contribute to the active site. His150 serves as a coordination point for CoA. CoA-binding positions include Ala177 and 211 to 212 (KT). The active site involves Cys216. 1D-myo-inositol hexakisphosphate contacts are provided by residues Asn222, 226 to 229 (KAHK), and 289 to 290 (KH). Lys289 is modified (N6-acetyllysine; by autocatalysis). 292-295 (ASLT) contributes to the CoA binding site. 1D-myo-inositol hexakisphosphate is bound by residues 314–317 (SEGH) and Arg326. CoA contacts are provided by residues 331–334 (RVKR) and 344–348 (SNTQF). Positions 358 and 362 each coordinate 1D-myo-inositol hexakisphosphate.

This sequence belongs to the acetyltransferase YopJ family. As to quaternary structure, interacts with host plant JAZ proteins (e.g. Glycine max JAZ1 and Arabidospis thaliana TIFY10B/JAZ2, TIFY11A/JAZ5, TIFY11B/JAZ6, TIFY5A/JAZ8 and TIFY3B/JAZ12) and triggers their degradation. Binds directly to SZE1 and SZE2 at the host plasma membrane; this interaction with a complex made of, at least, SZE1, BKN2/SZE2, ZAR1 and ZED1 triggers host immunity. 1D-myo-inositol hexakisphosphate is required as a cofactor. Autoacetylated at Lys-289; while autoacetylation at Lys-289 is required for virulence function to some extent, it is not essential.

The protein resides in the secreted. The protein localises to the host cell membrane. It is found in the host cytoplasm. It localises to the host cytoskeleton. Its subcellular location is the host nucleus. The catalysed reaction is L-threonyl-[protein] + acetyl-CoA = O-acetyl-L-threonyl-[protein] + CoA. The enzyme catalyses L-seryl-[protein] + acetyl-CoA = O-acetyl-L-seryl-[protein] + CoA. It catalyses the reaction L-lysyl-[protein] + acetyl-CoA = N(6)-acetyl-L-lysyl-[protein] + CoA + H(+). Its activity is regulated as follows. 1D-myo-inositol hexakisphosphate activates protein-acetyltransferase activity via an allosteric mechanism: 1D-myo-inositol hexakisphosphate-binding induces a conformational rearrangement that stimulates the interaction with acetyl-CoA. Acetyltransferase activity is activated by phytic acid. Functionally, serine/threonine-protein acetyltransferase translocated into infected cells, which impairs host microtubule network and host immunity by mediating acetylation of target proteins. Blocks secretion in host cells by mediating acetylation of host tubulin, thereby impairing host microbubule network. Impairs host cell immunity by mediating acetylation of host TIFY/JAZ transcription repressors (Arabidopsis thaliana TIFY10B/JAZ2, TIFY11A/JAZ5, TIFY11B/JAZ6, TIFY5A/JAZ8, TIFY9/JAZ10 and TIFY3B/JAZ12), thereby activating host jasmonate signaling. The chain is Serine/threonine-protein acetyltransferase HopZ1a from Pseudomonas syringae pv. syringae.